A 700-amino-acid chain; its full sequence is Calpain-2 catalytic subunit (700 aa).

At Ala2 the chain carries N-acetylalanine. Residues 2–19 (AGIAMKLAKDREAAEGLG) constitute a propeptide, anchors to the small subunit. One can recognise a Calpain catalytic domain in the interval 45–344 (LFQDPSFPAL…YSRLEICNLT (300 aa)). Ile89, Gly91, and Asp96 together coordinate Ca(2+). The active site involves Cys105. Residues Glu175, Gln229, and Lys230 each contribute to the Ca(2+) site. Residues His262 and Asn286 contribute to the active site. 4 residues coordinate Ca(2+): Glu292, Asp299, Gln319, and Glu323. The interval 345–514 (PDTLTCDSYK…KKADYQTVDD (170 aa)) is domain III. Residues 515–529 (EIEANIEEIEANEED) form a linker region. Residues 530-700 (IGDGFRRLFA…LISWLSFSVL (171 aa)) form a domain IV region. Residues Ala542, Asp545, Glu547, Glu552, Asp585, Asp587, Ser589, Lys591, Glu596, Asp615, Asp617, Ser619, Thr621, Glu626, Asp658, and Asn661 each coordinate Ca(2+). EF-hand domains follow at residues 572–605 (FSIE…TKIQ) and 602–637 (TKIQ…AGFK). Positions 667–700 (VRLEILFKIFKQLDPENTGTIQLDLISWLSFSVL) constitute an EF-hand 3 domain.

The protein belongs to the peptidase C2 family. As to quaternary structure, forms a heterodimer with a small (regulatory) subunit (CAPNS1). Interacts with CPEB3; this leads to cleavage of CPEB3. Ca(2+) serves as cofactor. Ubiquitous.

It is found in the cytoplasm. The protein localises to the cell membrane. It catalyses the reaction Broad endopeptidase specificity.. Activated by 200-1000 micromolar concentrations of calcium and inhibited by calpastatin. In terms of biological role, calcium-regulated non-lysosomal thiol-protease which catalyze limited proteolysis of substrates involved in cytoskeletal remodeling and signal transduction. Proteolytically cleaves MYOC at 'Arg-226'. Proteolytically cleaves CPEB3 following neuronal stimulation which abolishes CPEB3 translational repressor activity, leading to translation of CPEB3 target mRNAs. In Rattus norvegicus (Rat), this protein is Calpain-2 catalytic subunit (Capn2).